A 289-amino-acid chain; its full sequence is Heme oxygenase 1 (289 aa).

Over 1–266 (MERPQLDSMS…SQISTSSSQT (266 aa)) the chain is Cytoplasmic. Lys18, His25, Tyr134, and Arg183 together coordinate heme b. Residues 225-261 (HKDQSPSQTEFLRQRPASLVQDTTSAETPRGKSQIST) are disordered. 2 positions are modified to phosphoserine: Ser229 and Ser242. Over residues 244-261 (VQDTTSAETPRGKSQIST) the composition is skewed to polar residues. Residues 267–289 (PLLRWVLTLSFLLATVAVGIYAM) traverse the membrane as a helical; Anchor for type IV membrane protein segment.

The protein belongs to the heme oxygenase family. As to quaternary structure, homodimer and higher order homooligomer. Oligomerization is crucial for its stability and function in the endoplasmic reticulum. Interacts with FLVCR2; this interaction is potentiated in the presence of heme. A soluble form arises by proteolytic removal of the membrane anchor.

The protein localises to the endoplasmic reticulum membrane. It carries out the reaction heme b + 3 reduced [NADPH--hemoprotein reductase] + 3 O2 = biliverdin IXalpha + CO + Fe(2+) + 3 oxidized [NADPH--hemoprotein reductase] + 3 H2O + H(+). With respect to regulation, inhibited by metalloporphyrins such as Sn- and Zn-protoporphyrins. In terms of biological role, catalyzes the oxidative cleavage of heme at the alpha-methene bridge carbon, released as carbon monoxide (CO), to generate biliverdin IXalpha, while releasing the central heme iron chelate as ferrous iron. Affords protection against programmed cell death and this cytoprotective effect relies on its ability to catabolize free heme and prevent it from sensitizing cells to undergo apoptosis. Its function is as follows. Catalyzes the oxidative cleavage of heme at the alpha-methene bridge carbon, released as carbon monoxide (CO), to generate biliverdin IXalpha, while releasing the central heme iron chelate as ferrous iron. The sequence is that of Heme oxygenase 1 (Hmox1) from Rattus norvegicus (Rat).